An 818-amino-acid chain; its full sequence is Rho GTPase-activating protein 44 (818 aa).

A BAR domain is found at 14 to 249 (QTVGRAEKTE…IKAQQEAWVE (236 aa)). A Rho-GAP domain is found at 255-445 (KPLEEHLTIS…PIIQHADWFF (191 aa)). Disordered stretches follow at residues 467 to 493 (ANYSSMPSPDMDPADRRQPEQARRPLS), 530 to 772 (SSAG…SMST), and 789 to 818 (TLRLSPLEHMRRHSVTDKRDSEEESESTAL). Residues 479 to 489 (PADRRQPEQAR) show a composition bias toward basic and acidic residues. A Phosphoserine modification is found at Ser-493. Residues 563 to 579 (QPLDSPAAPALSPSGLG) show a composition bias toward low complexity. Over residues 598 to 611 (GSAQKGSPGSSQGT) the composition is skewed to polar residues. Low complexity-rich tracts occupy residues 614 to 641 (AGTQPGAQPGAQPGASPSPSQPPADQSP) and 688 to 708 (SPYGLSYPQGYSLASGQLSPA). The interaction with BST2 stretch occupies residues 731–818 (KPRQRPTLPP…SEEESESTAL (88 aa)). Residues 746-757 (VNLSASSPQSTE) show a composition bias toward polar residues. Residues 764–767 (MSPG) carry the PDZ-binding motif. Basic and acidic residues predominate over residues 794–809 (PLEHMRRHSVTDKRDS). Residue Ser-809 is modified to Phosphoserine. The PDZ-binding signature appears at 815 to 818 (STAL).

As to quaternary structure, interacts with BST2 (via cytoplasmic domain). Interacts (probably via PDZ-binding motif) with SHANK3 (via PDZ domain); the interaction takes place in dendritic spines and promotes GRIA1 exocytosis. Highly expressed in brain. Expressed at weak level in other tissues.

The protein localises to the cell projection. It localises to the dendritic spine. It is found in the recycling endosome. The protein resides in the presynapse. Its subcellular location is the dendrite. Its function is as follows. GTPase-activating protein (GAP) that stimulates the GTPase activity of Rho-type GTPases. Thereby, controls Rho-type GTPases cycling between their active GTP-bound and inactive GDP-bound states. Acts as a GAP at least for CDC42 and RAC1. In neurons, is involved in dendritic spine formation and synaptic plasticity in a specific RAC1-GAP activity. Limits the initiation of exploratory dendritic filopodia. Recruited to actin-patches that seed filopodia, binds specifically to plasma membrane sections that are deformed inward by acto-myosin mediated contractile forces. Acts through GAP activity on RAC1 to reduce actin polymerization necessary for filopodia formation. In association with SHANK3, promotes GRIA1 exocytosis from recycling endosomes and spine morphological changes associated to long-term potentiation. The chain is Rho GTPase-activating protein 44 from Homo sapiens (Human).